The sequence spans 467 residues: Neutral protease 2 homolog NFIA_031120 (467 aa).

The N-terminal stretch at 1–19 is a signal peptide; that stretch reads MKITALASAILAVVHGALA. A propeptide spanning residues 20-172 is cleaved from the precursor; it reads LPARAPALDI…PASIKPLDRR (153 aa). Intrachain disulfides connect cysteine 179–cysteine 251 and cysteine 258–cysteine 276. Histidine 300 contributes to the Zn(2+) binding site. Residue glutamate 301 is part of the active site. Residues histidine 304 and aspartate 315 each coordinate Zn(2+). Over residues 359-451 the composition is skewed to polar residues; that stretch reads WDGNSQPGQT…TMWDGSSEPG (93 aa). A disordered region spans residues 359 to 467; the sequence is WDGNSQPGQT…HTTWGNFYQA (109 aa).

Belongs to the peptidase M35 family. Zn(2+) is required as a cofactor.

The protein resides in the secreted. The catalysed reaction is Preferential cleavage of bonds with hydrophobic residues in P1'. Also 3-Asn-|-Gln-4 and 8-Gly-|-Ser-9 bonds in insulin B chain.. Functionally, secreted metalloproteinase that allows assimilation of proteinaceous substrates. Shows high activities on basic nuclear substrates such as histone and protamine. The chain is Neutral protease 2 homolog NFIA_031120 from Neosartorya fischeri (strain ATCC 1020 / DSM 3700 / CBS 544.65 / FGSC A1164 / JCM 1740 / NRRL 181 / WB 181) (Aspergillus fischerianus).